Here is a 159-residue protein sequence, read N- to C-terminus: 2-C-methyl-D-erythritol 2,4-cyclodiphosphate synthase (159 aa).

Positions 10 and 12 each coordinate a divalent metal cation. Residues 10–12 (DVH) and 36–37 (HS) each bind 4-CDP-2-C-methyl-D-erythritol 2-phosphate. Histidine 44 serves as a coordination point for a divalent metal cation. 4-CDP-2-C-methyl-D-erythritol 2-phosphate is bound by residues 58–60 (DIG), 63–67 (FPDTD), 102–108 (AQAPKMA), 134–137 (TTTE), phenylalanine 141, 141–144 (FTGR), and arginine 144.

The protein belongs to the IspF family. In terms of assembly, homotrimer. Requires a divalent metal cation as cofactor.

It catalyses the reaction 4-CDP-2-C-methyl-D-erythritol 2-phosphate = 2-C-methyl-D-erythritol 2,4-cyclic diphosphate + CMP. The protein operates within isoprenoid biosynthesis; isopentenyl diphosphate biosynthesis via DXP pathway; isopentenyl diphosphate from 1-deoxy-D-xylulose 5-phosphate: step 4/6. In terms of biological role, involved in the biosynthesis of isopentenyl diphosphate (IPP) and dimethylallyl diphosphate (DMAPP), two major building blocks of isoprenoid compounds. Catalyzes the conversion of 4-diphosphocytidyl-2-C-methyl-D-erythritol 2-phosphate (CDP-ME2P) to 2-C-methyl-D-erythritol 2,4-cyclodiphosphate (ME-CPP) with a corresponding release of cytidine 5-monophosphate (CMP). This Shewanella oneidensis (strain ATCC 700550 / JCM 31522 / CIP 106686 / LMG 19005 / NCIMB 14063 / MR-1) protein is 2-C-methyl-D-erythritol 2,4-cyclodiphosphate synthase.